The chain runs to 418 residues: Putative heat shock protein HSP 90-alpha A4 (418 aa).

Residues Asp-33, Lys-52, Phe-78, and Arg-204 each coordinate ATP. Disordered stretches follow at residues 255-289 (EDLE…TSAK) and 383-418 (GLGT…RMEK). Over residues 265-274 (EKKKQEEGKQ) the composition is skewed to basic and acidic residues.

This sequence belongs to the heat shock protein 90 family. Homodimer.

It localises to the cytoplasm. Its function is as follows. Putative molecular chaperone that may promote the maturation, structural maintenance and proper regulation of specific target proteins. The protein is Putative heat shock protein HSP 90-alpha A4 (HSP90AA4P) of Homo sapiens (Human).